The primary structure comprises 189 residues: Elongation factor P (189 aa).

It belongs to the elongation factor P family.

It is found in the cytoplasm. It functions in the pathway protein biosynthesis; polypeptide chain elongation. Functionally, involved in peptide bond synthesis. Stimulates efficient translation and peptide-bond synthesis on native or reconstituted 70S ribosomes in vitro. Probably functions indirectly by altering the affinity of the ribosome for aminoacyl-tRNA, thus increasing their reactivity as acceptors for peptidyl transferase. This Aster yellows witches'-broom phytoplasma (strain AYWB) protein is Elongation factor P.